The following is a 58-amino-acid chain: Small ribosomal subunit protein bS21 (58 aa).

Residues 36-58 are disordered; it reads EHYEKPSVKRKKKSEAARKRKFK. Residues 43–58 are compositionally biased toward basic residues; that stretch reads VKRKKKSEAARKRKFK.

The protein belongs to the bacterial ribosomal protein bS21 family.

The sequence is that of Small ribosomal subunit protein bS21 from Clostridium kluyveri (strain NBRC 12016).